Consider the following 993-residue polypeptide: Replication protein 1a (993 aa).

The tract at residues 51 to 409 (NVLGVKDSEV…TIVINGMSMQ (359 aa)) is methyltransferase. In terms of domain architecture, Alphavirus-like MT spans 72-290 (HLTQQEFAPH…HDWENIRSFL (219 aa)). A disordered region spans residues 543–576 (EVSDRPEAPSPTPDDPADVCGKEQEVSELDSLSA). The (+)RNA virus helicase ATP-binding domain maps to 684 to 838 (NSECVVCNNE…KIIPDETSDA (155 aa)). Residues 712–975 (VDGVAGCGKT…LTRHKVTFRY (264 aa)) form an ATP-dependent helicase region. Position 714–721 (714–721 (GVAGCGKT)) interacts with ATP. The 155-residue stretch at 839-993 (DTTFRSPQDV…DLIAECIARA (155 aa)) folds into the (+)RNA virus helicase C-terminal domain.

The protein belongs to the bromoviridae replication protein 1a family. Interacts with RNA-directed RNA polymerase 2a.

The protein resides in the host endoplasmic reticulum membrane. Functionally, involved in the virus replication. Contains a helicase domain and a methyltransferase domain. The methyltransferase domain is probably involved in viral RNA capping. Involved in the formation of ER membrane spherular invaginations in which RNA replication complexes form. This Cucumber mosaic virus (strain Ixora) (CMV) protein is Replication protein 1a.